Consider the following 149-residue polypeptide: 3-dehydroquinate dehydratase (149 aa).

Residue Tyr-26 is the Proton acceptor of the active site. Asn-77, His-83, and Asp-90 together coordinate substrate. Residue His-103 is the Proton donor of the active site. Substrate-binding positions include 104 to 105 (LS) and Arg-114.

Belongs to the type-II 3-dehydroquinase family. In terms of assembly, homododecamer.

The catalysed reaction is 3-dehydroquinate = 3-dehydroshikimate + H2O. It participates in metabolic intermediate biosynthesis; chorismate biosynthesis; chorismate from D-erythrose 4-phosphate and phosphoenolpyruvate: step 3/7. In terms of biological role, catalyzes a trans-dehydration via an enolate intermediate. In Vibrio vulnificus (strain YJ016), this protein is 3-dehydroquinate dehydratase.